The following is a 272-amino-acid chain: Undecaprenyl-diphosphatase (272 aa).

A run of 8 helical transmembrane segments spans residues 2 to 22 (LELIKAIFLGIVEGITEWLPI), 50 to 70 (VIQLGAIMAVVVLYWNKLFPF), 83 to 103 (FSLWIKVLAATLPAALIGVPF), 110 to 130 (LFYNYITVAITLIVYGVLFII), 148 to 168 (LGYKAVLLIGAFQVLALIPGT), 195 to 215 (LAIPVMFGASLLKLVKFGFAF), 220 to 240 (LIILLTGMIVAFAVSIFAIKF), and 250 to 270 (FKAFGYYRIILGLIVVLYFLA).

Belongs to the UppP family.

The protein resides in the cell membrane. It catalyses the reaction di-trans,octa-cis-undecaprenyl diphosphate + H2O = di-trans,octa-cis-undecaprenyl phosphate + phosphate + H(+). Functionally, catalyzes the dephosphorylation of undecaprenyl diphosphate (UPP). Confers resistance to bacitracin. The sequence is that of Undecaprenyl-diphosphatase from Acetivibrio thermocellus (strain ATCC 27405 / DSM 1237 / JCM 9322 / NBRC 103400 / NCIMB 10682 / NRRL B-4536 / VPI 7372) (Clostridium thermocellum).